Consider the following 64-residue polypeptide: Large ribosomal subunit protein bL35 (64 aa).

The disordered stretch occupies residues 1–28 (MPKVKTKSGAKKRFKLTGSGKIKRKSAY).

Belongs to the bacterial ribosomal protein bL35 family.

The protein is Large ribosomal subunit protein bL35 of Cytophaga hutchinsonii (strain ATCC 33406 / DSM 1761 / CIP 103989 / NBRC 15051 / NCIMB 9469 / D465).